The sequence spans 722 residues: Probable glycerol-3-phosphate dehydrogenase, mitochondrial (722 aa).

A mitochondrion-targeting transit peptide spans 1–43 (MSWVRFTKTGVAVVATSAAAVLALDMTNERRFQRQVKDHFRTV). 76–104 (DVLIIGGGATGAGVALDAQTRGLKTALVE) is an FAD binding site. EF-hand domains follow at residues 624 to 659 (EEMQ…HNQK) and 660 to 695 (IDER…LKGG). Positions 673, 675, 677, 679, and 684 each coordinate Ca(2+).

The protein belongs to the FAD-dependent glycerol-3-phosphate dehydrogenase family. FAD is required as a cofactor.

The protein resides in the mitochondrion. The catalysed reaction is a quinone + sn-glycerol 3-phosphate = dihydroxyacetone phosphate + a quinol. Its pathway is polyol metabolism; glycerol degradation via glycerol kinase pathway; glycerone phosphate from sn-glycerol 3-phosphate (anaerobic route): step 1/1. Calcium-binding enhances the activity of the enzyme. The sequence is that of Probable glycerol-3-phosphate dehydrogenase, mitochondrial from Caenorhabditis elegans.